The following is a 205-amino-acid chain: Holliday junction branch migration complex subunit RuvA (205 aa).

Positions 1-64 (MIGKLKGVVD…EDQIRLFGFS (64 aa)) are domain I. A domain II region spans residues 65–143 (SAAERDWFRL…GFSASEPLAA (79 aa)). The flexible linker stretch occupies residues 144–152 (QLGGGGVAS). Positions 153 to 205 (AQGGAAADAVSALVNLGYGVPQANAAIAAALRGAGEGAKTEVLIRLGLKELAK) are domain III.

This sequence belongs to the RuvA family. In terms of assembly, homotetramer. Forms an RuvA(8)-RuvB(12)-Holliday junction (HJ) complex. HJ DNA is sandwiched between 2 RuvA tetramers; dsDNA enters through RuvA and exits via RuvB. An RuvB hexamer assembles on each DNA strand where it exits the tetramer. Each RuvB hexamer is contacted by two RuvA subunits (via domain III) on 2 adjacent RuvB subunits; this complex drives branch migration. In the full resolvosome a probable DNA-RuvA(4)-RuvB(12)-RuvC(2) complex forms which resolves the HJ.

The protein localises to the cytoplasm. In terms of biological role, the RuvA-RuvB-RuvC complex processes Holliday junction (HJ) DNA during genetic recombination and DNA repair, while the RuvA-RuvB complex plays an important role in the rescue of blocked DNA replication forks via replication fork reversal (RFR). RuvA specifically binds to HJ cruciform DNA, conferring on it an open structure. The RuvB hexamer acts as an ATP-dependent pump, pulling dsDNA into and through the RuvAB complex. HJ branch migration allows RuvC to scan DNA until it finds its consensus sequence, where it cleaves and resolves the cruciform DNA. In Xanthobacter autotrophicus (strain ATCC BAA-1158 / Py2), this protein is Holliday junction branch migration complex subunit RuvA.